A 58-amino-acid polypeptide reads, in one-letter code: MAVPARRTSKTRKRLRRTHYKLQVPGMSACPNCGELRKAHHVCPSCGYYGDKEVVKTK.

This sequence belongs to the bacterial ribosomal protein bL32 family.

The sequence is that of Large ribosomal subunit protein bL32 from Ligilactobacillus salivarius (strain UCC118) (Lactobacillus salivarius).